Here is a 116-residue protein sequence, read N- to C-terminus: M-zodatoxin-Lt6a/b (116 aa).

An N-terminal signal peptide occupies residues 1–22; it reads MKYFVVALTLAVAFVCIEECKT. 2 propeptides span residues 23-44 and 80-83; these read VEIG…EEAR and EEAR. 2 consecutive short sequence motifs (processing quadruplet motif) follow at residues 41–44 and 80–83; these read EEAR. Position 84 is a pyrrolidone carboxylic acid (Gln84).

The protein belongs to the cationic peptide 03 (latarcin) family. 06 subfamily. In terms of processing, cleavage of the propeptide depends on the processing quadruplet motif (XXXR, with at least one of X being E). As to expression, expressed by the venom gland.

Its subcellular location is the secreted. In terms of biological role, does not have antimicrobial activity against neither Gram-positive bacteria (A.globiformis VKM Ac-1112 (MIC&gt;70 uM), and B.subtilis VKM B-501 (MIC&gt;70 uM)), nor Gram-negative bacteria (E.coli DH5-alpha (MIC&gt;70 uM), E.coli MH1 (MIC&gt;70 uM), and P.aeruginosa PAO1 (MIC&gt;70 uM)), nor yeasts (P.pastoris GS115 (MIC&gt;70 uM), and S.cerevisiae Y190 (MIC&gt;70 uM)). Does not have hemolytic activity against rabbit erythrocytes. However, it causes some conductance changes in planar bilayer membranes, without membrane rupture, suggesting a cytolytic function on other biological targets. It causes paralysis, but is not lethal when injected into insect (M.domestica) larvae. The protein is M-zodatoxin-Lt6a/b of Lachesana tarabaevi (Spider).